The primary structure comprises 418 residues: MGLTLTQKILSAKIGREVKAGELIEVDVDMVLGNDVTAPVAIKEFEKIGKEEVFDKTKIALVPDHFVPNKDIKSAEQVNIMRKFAKKHGIVNFFEVGQMGIEHALLPEKGLVLPGDVVIGADSHTCTYGALTCFSTGVGSTDMAAAMATGKAWFKVPEAIKFVLKGNLQKWVSGKDVILYIIGKIGVDGALYKSMEFTGNIKALSIDDRFTIANMAIEAGAKNGIFDFDEITEAYVKGRAKREYKVFERDEDAEYSEVYEINLDEIRPQVAFPHLPENTRSIDEVGKVKIDQVVIGSCTNGRLSDMEIAYKILKGKKVHPDVRLLIFPATQEIYLECVKRGYIEEFIKAGAAVSTPTCGPCLGGHMGILARGERALATTNRNFVGRMGHPESEVYLSSPAVAAASAIAGYIVSPEEVE.

[4Fe-4S] cluster is bound by residues Cys-298, Cys-358, and Cys-361.

The protein belongs to the aconitase/IPM isomerase family. LeuC type 2 subfamily. As to quaternary structure, heterodimer of LeuC and LeuD. [4Fe-4S] cluster serves as cofactor.

It catalyses the reaction (2R,3S)-3-isopropylmalate = (2S)-2-isopropylmalate. It participates in amino-acid biosynthesis; L-leucine biosynthesis; L-leucine from 3-methyl-2-oxobutanoate: step 2/4. Functionally, catalyzes the isomerization between 2-isopropylmalate and 3-isopropylmalate, via the formation of 2-isopropylmaleate. In Thermoanaerobacter sp. (strain X514), this protein is 3-isopropylmalate dehydratase large subunit.